We begin with the raw amino-acid sequence, 397 residues long: Lysophospholipid transporter LplT (397 aa).

At 1–17 (MSESVHTNTSLWSKGMK) the chain is on the periplasmic side. Residues 18-38 (AVIVAQFLSAFGDNALLFATL) form a helical membrane-spanning segment. Residues 39–52 (ALLKAQFYPEWSQP) lie on the Cytoplasmic side of the membrane. Residues 53 to 73 (ILQMVFVGAYILFAPFVGQVA) form a helical membrane-spanning segment. Residues 74–90 (DSFAKGRVMMFANGLKL) are Periplasmic-facing. A helical membrane pass occupies residues 91-111 (LGAASICFGINPFLGYTLVGV). The Cytoplasmic portion of the chain corresponds to 112–144 (GAAAYSPAKYGILGELTTGSKLVKANGLMEAST). A helical transmembrane segment spans residues 145–165 (IAAILLGSVAGGVLADWHILV). Ala166 is a topological domain (periplasmic). Residues 167–187 (LAACALAYGGAVVANIYIPKL) form a helical membrane-spanning segment. Residues 188-226 (AAARPGQSWNLISMTRSFLNACTSLWRNGETRFSLVGTS) are Cytoplasmic-facing. A helical membrane pass occupies residues 227 to 247 (LFWGAGVTLRFLLVLWVPVAL). At 248–256 (GITDNATPT) the chain is on the periplasmic side. Residues 257 to 277 (YLNAMVAIGIVVGAGAAAKLV) traverse the membrane as a helical segment. The Cytoplasmic portion of the chain corresponds to 278-280 (TLE). Residues 281 to 301 (TVSRCMPAGILIGVVVLIFSL) form a helical membrane-spanning segment. At 302 to 304 (QHE) the chain is on the periplasmic side. Residues 305-325 (LLPAYALLMLIGVLGGFFVVP) traverse the membrane as a helical segment. Residues 326–343 (LNALLQERGKKSVGAGNA) lie on the Cytoplasmic side of the membrane. The chain crosses the membrane as a helical span at residues 344 to 364 (IAVQNLGENSAMLLMLGIYSL). At 365-366 (AV) the chain is on the periplasmic side. Residues 367–387 (MVGIPVVPIGIGFGALFALAI) traverse the membrane as a helical segment. Residues 388–397 (TALWIWQRRH) are Cytoplasmic-facing.

This sequence belongs to the major facilitator superfamily. LplT (TC 2.A.1.42) family.

Its subcellular location is the cell inner membrane. Catalyzes the facilitated diffusion of 2-acyl-glycero-3-phosphoethanolamine (2-acyl-GPE) into the cell. In Escherichia coli O6:K15:H31 (strain 536 / UPEC), this protein is Lysophospholipid transporter LplT.